The sequence spans 205 residues: Methylthioribulose-1-phosphate dehydratase (205 aa).

Residues His-96 and His-98 each coordinate Zn(2+).

It belongs to the aldolase class II family. MtnB subfamily. Zn(2+) is required as a cofactor.

The catalysed reaction is 5-(methylsulfanyl)-D-ribulose 1-phosphate = 5-methylsulfanyl-2,3-dioxopentyl phosphate + H2O. Its pathway is amino-acid biosynthesis; L-methionine biosynthesis via salvage pathway; L-methionine from S-methyl-5-thio-alpha-D-ribose 1-phosphate: step 2/6. Functionally, catalyzes the dehydration of methylthioribulose-1-phosphate (MTRu-1-P) into 2,3-diketo-5-methylthiopentyl-1-phosphate (DK-MTP-1-P). This chain is Methylthioribulose-1-phosphate dehydratase, found in Exiguobacterium sp. (strain ATCC BAA-1283 / AT1b).